The chain runs to 321 residues: Glucokinase (321 aa).

8–13 contacts ATP; that stretch reads GDVGGT.

It belongs to the bacterial glucokinase family.

The protein localises to the cytoplasm. The catalysed reaction is D-glucose + ATP = D-glucose 6-phosphate + ADP + H(+). In Shigella boydii serotype 18 (strain CDC 3083-94 / BS512), this protein is Glucokinase.